The following is a 609-amino-acid chain: Transcription factor ntnD (609 aa).

The segment at residues 1-7 is a DNA-binding region (zn(2)-C6 fungal-type); that stretch reads MCVGIEC. A disordered region spans residues 46–104; it reads FRDQNESSLNRIHNRRTSNSQPSTRSINNTTTIPASNNEPLALSQPPSASSQNQVEKDQ. A compositionally biased stretch (polar residues) spans 51 to 84; that stretch reads ESSLNRIHNRRTSNSQPSTRSINNTTTIPASNNE. The segment covering 85-97 has biased composition (low complexity); the sequence is PLALSQPPSASSQ.

It belongs to the TRI10 transcription regulator family.

It localises to the nucleus. Its function is as follows. Transcription factor; part of the gene cluster that mediates the biosynthesis of meroterpenoids. The protein is Transcription factor ntnD of Nectria sp.